The following is a 302-amino-acid chain: Mitochondrial glycine transporter (302 aa).

Solcar repeat units lie at residues 22-112 (HPVF…LKHH), 119-203 (PKPL…AKKL), and 213-297 (FSPV…MMEK). 6 consecutive transmembrane segments (helical) span residues 28–53 (FVCG…TRIQ), 87–113 (GVSP…KHHF), 125–150 (VMLG…TRYE), 178–201 (GLTA…TRAK), 217–243 (LNFS…KTHM), and 272–290 (GGVP…AWTV).

The protein belongs to the mitochondrial carrier (TC 2.A.29) family. SLC25A38 subfamily.

It is found in the mitochondrion inner membrane. It carries out the reaction glycine(in) = glycine(out). Functionally, mitochondrial glycine transporter that imports glycine into the mitochondrial matrix. Plays an important role in providing glycine for the first enzymatic step in heme biosynthesis, the condensation of glycine with succinyl-CoA to produce 5-aminolevulinate (ALA) in the mitochondrial matrix. Required during erythropoiesis. In terms of biological role, may play a role as pro-apoptotic protein that induces caspase-dependent apoptosis. This chain is Mitochondrial glycine transporter, found in Xenopus laevis (African clawed frog).